A 1492-amino-acid chain; its full sequence is ATP-binding cassette sub-family C member 10 (1492 aa).

The next 9 membrane-spanning stretches (helical) occupy residues 32 to 52, 70 to 90, 102 to 122, 133 to 153, 172 to 192, 293 to 313, 320 to 340, 391 to 411, and 414 to 434; these read LVLS…YLGT, LAAS…VALP, VLAG…LWVL, PLAL…TVLW, LCLL…WAAP, LVGT…VGFL, LSHG…GAVL, LLNF…LAIT, and LLYQ…LLLV. Residues 285–563 enclose the ABC transmembrane type-1 1 domain; sequence YLALGLLKLV…FPWVINGLLE (279 aa). Phosphothreonine is present on T463. Phosphoserine is present on S467. A run of 2 helical transmembrane segments spans residues 507–527 and 538–558; these read VYLW…TYVL and FTAL…PWVI. One can recognise an ABC transporter 1 domain in the interval 598 to 824; that stretch reads LELHGALFSW…VQAVPKAWAE (227 aa). An ATP-binding site is contributed by 633–640; that stretch reads GKVGCGKS. The interval 825-860 is disordered; sequence NGQESDSATAQSVQNPEKTKEGLEEEQSTSGRLLQE. Polar residues predominate over residues 826–840; it reads GQESDSATAQSVQNP. 6 helical membrane passes run 875 to 895, 933 to 953, 974 to 994, 1051 to 1071, 1153 to 1173, and 1182 to 1202; these read AYWK…LLLM, LFSP…VFPL, IAGV…AGTL, AGLL…LLLL, IRLQ…ALVQ, and GLVG…SGLV. Residues 885–1210 enclose the ABC transmembrane type-1 2 domain; it reads ALAILFSLLL…LVSSFTQTEA (326 aa). Positions 1246-1479 constitute an ABC transporter 2 domain; it reads VEFQDVVLAY…PHSLFQQLLQ (234 aa). 1280–1287 serves as a coordination point for ATP; it reads GRTGSGKS.

Belongs to the ABC transporter superfamily. ABCC family. Conjugate transporter (TC 3.A.1.208) subfamily. In terms of tissue distribution, in testis, localized to peritubular myoid cells, Leydig cells, along the basal membrane of Sertoli cells, moderately in the adluminal compartment of the seminiferous tubules, and in vascular endothelial cells. As to expression, specifically expressed in spleen. Widely expressed.

It is found in the cell membrane. Its subcellular location is the basolateral cell membrane. The protein localises to the basal cell membrane. The enzyme catalyses ATP + H2O + xenobioticSide 1 = ADP + phosphate + xenobioticSide 2.. It carries out the reaction an S-substituted glutathione(in) + ATP + H2O = an S-substituted glutathione(out) + ADP + phosphate + H(+). It catalyses the reaction 17beta-estradiol 17-O-(beta-D-glucuronate)(in) + ATP + H2O = 17beta-estradiol 17-O-(beta-D-glucuronate)(out) + ADP + phosphate + H(+). The catalysed reaction is leukotriene C4(in) + ATP + H2O = leukotriene C4(out) + ADP + phosphate + H(+). ATP-dependent transporter of the ATP-binding cassette (ABC) family that actively extrudes physiological compounds, and xenobiotics from cells. Lipophilic anion transporter that mediates ATP-dependent transport of glucuronide conjugates such as estradiol-17-beta-o-glucuronide and GSH conjugates such as leukotriene C4 (LTC4). May contribute to regulate the transport of organic compounds in testes across the blood-testis-barrier. Mediates multidrug resistance (MDR) in cancer cells by preventing the intracellular accumulation of certain antitumor drugs, such as, docetaxel and paclitaxel. Does not transport glycocholic acid, taurocholic acid, MTX, folic acid, cAMP, or cGMP. The chain is ATP-binding cassette sub-family C member 10 (ABCC10) from Homo sapiens (Human).